The primary structure comprises 109 residues: Small ribosomal subunit protein uS17 (109 aa).

This sequence belongs to the universal ribosomal protein uS17 family. As to quaternary structure, part of the 30S ribosomal subunit.

Its function is as follows. One of the primary rRNA binding proteins, it binds specifically to the 5'-end of 16S ribosomal RNA. In Methanococcoides burtonii (strain DSM 6242 / NBRC 107633 / OCM 468 / ACE-M), this protein is Small ribosomal subunit protein uS17.